We begin with the raw amino-acid sequence, 363 residues long: MAQNSLRLVEDKSVDKSKALEAALSQIERSFGKGSIMKLGSNENVVEVETVSTGSLSLDIALGIGGLPKGRIIEIYGPESSGKTTLALQTIAEAQKKGGICAFVDAEHALDPVYARKLGVDLQSLLISQPDTGEQALEITDTLVRSGAVDVLVIDSVAALTPRAEIEGEMGDSLPGLQARLMSQALRKLTASISKSKCMVIFINQIRMKIGVMFGSPETTTGGNALKFYASVRLDIRRIGAVKEREEVVGNQTRVKVVKNKMAPPFKQVEFDIMYGEGVSKTGELVDLGVKAGIVEKSGAWFSYNSQRLGQGRENAKTFLRDNPDTANEIELALRQNAGLIADRFLQNGGPDAGEGDDGSDEG.

G77–T84 serves as a coordination point for ATP.

This sequence belongs to the RecA family.

The protein resides in the cytoplasm. Can catalyze the hydrolysis of ATP in the presence of single-stranded DNA, the ATP-dependent uptake of single-stranded DNA by duplex DNA, and the ATP-dependent hybridization of homologous single-stranded DNAs. It interacts with LexA causing its activation and leading to its autocatalytic cleavage. This chain is Protein RecA, found in Agrobacterium fabrum (strain C58 / ATCC 33970) (Agrobacterium tumefaciens (strain C58)).